The following is a 183-amino-acid chain: Putative manganese efflux pump MntP (183 aa).

The next 6 helical transmembrane spans lie at 3 to 23 (TISV…LSIY), 43 to 63 (TFGI…ILFI), 66 to 86 (ISLY…LMML), 107 to 127 (LIIM…TFSI), 134 to 154 (FLYT…GFIL), and 161 to 181 (ILGQ…SINI).

Belongs to the MntP (TC 9.B.29) family.

It localises to the cell inner membrane. Its function is as follows. Probably functions as a manganese efflux pump. The chain is Putative manganese efflux pump MntP from Fusobacterium nucleatum subsp. nucleatum (strain ATCC 25586 / DSM 15643 / BCRC 10681 / CIP 101130 / JCM 8532 / KCTC 2640 / LMG 13131 / VPI 4355).